The primary structure comprises 255 residues: Hydroxyacylglutathione hydrolase (255 aa).

Residues histidine 56, histidine 58, aspartate 60, histidine 61, histidine 114, aspartate 133, and histidine 171 each contribute to the Zn(2+) site.

It belongs to the metallo-beta-lactamase superfamily. Glyoxalase II family. Monomer. Zn(2+) serves as cofactor.

The enzyme catalyses an S-(2-hydroxyacyl)glutathione + H2O = a 2-hydroxy carboxylate + glutathione + H(+). The protein operates within secondary metabolite metabolism; methylglyoxal degradation; (R)-lactate from methylglyoxal: step 2/2. In terms of biological role, thiolesterase that catalyzes the hydrolysis of S-D-lactoyl-glutathione to form glutathione and D-lactic acid. This Fuscovulum blasticum (Rhodobacter blasticus) protein is Hydroxyacylglutathione hydrolase.